Here is a 63-residue protein sequence, read N- to C-terminus: Large ribosomal subunit protein bL35 (63 aa).

It belongs to the bacterial ribosomal protein bL35 family.

The sequence is that of Large ribosomal subunit protein bL35 from Campylobacter jejuni (strain RM1221).